The primary structure comprises 331 residues: Zinc finger CW-type PWWP domain protein 2 homolog (331 aa).

The CW-type zinc finger occupies 9-64 (EFVHRTWVQCENESCLKWRLLSPAAAAAVNPSEPWYCFMNTDPSYSSCSVSEEDFP). The Zn(2+) site is built by C18, C23, C45, and C56. A PWWP domain is found at 83-147 (LGSLVLVKLR…AAFVGHFSLT (65 aa)). The disordered stretch occupies residues 264-295 (IQEPTAREDESQGEQLSQCSPESPTGSPFQSY). Positions 276–293 (GEQLSQCSPESPTGSPFQ) are enriched in polar residues.

Histone methylation reader which binds to non-methylated (H3K4me0), monomethylated (H3K4me1), dimethylated (H3K4me2) and trimethylated (H3K4me3) 'Lys-4' on histone H3. The order of binding preference is H3K4me3 &gt; H3K4me2 &gt; H3K4me1 &gt; H3K4me0. The protein is Zinc finger CW-type PWWP domain protein 2 homolog (Zcwpw2) of Mus musculus (Mouse).